The primary structure comprises 516 residues: L-amino-acid oxidase (516 aa).

The signal sequence occupies residues M1–C18. C28 and C189 are joined by a disulfide. FAD contacts are provided by residues M61–A62, E81–A82, R89, and G103–R106. Residues R106 and H239 each contribute to the substrate site. An FAD-binding site is contributed by V279. C349 and C430 are joined by a disulfide. N379 carries N-linked (GlcNAc...) asparagine glycosylation. Position 390 (Y390) interacts with substrate. FAD-binding positions include E475 and G482–T487. A substrate-binding site is contributed by G482–W483.

This sequence belongs to the flavin monoamine oxidase family. FIG1 subfamily. As to quaternary structure, homodimer; non-covalently linked. It depends on FAD as a cofactor. In terms of tissue distribution, expressed by the venom gland.

It localises to the secreted. The catalysed reaction is an L-alpha-amino acid + O2 + H2O = a 2-oxocarboxylate + H2O2 + NH4(+). Catalyzes an oxidative deamination of predominantly hydrophobic and aromatic L-amino acids, thus producing hydrogen peroxide that may contribute to the diverse toxic effects of this enzyme. Exhibits diverse biological activities, such as hemolysis, edema, hemorrhage, apoptosis, antibacterial and antiparasitic activities, as well as regulation of platelet aggregation. Effects of snake L-amino oxidases on platelets are controversial, since they either induce aggregation or inhibit agonist-induced aggregation. These different effects are probably due to different experimental conditions. This is L-amino-acid oxidase from Crotalus adamanteus (Eastern diamondback rattlesnake).